The chain runs to 354 residues: Tsukushi (354 aa).

Residues 1–17 form the signal peptide; the sequence is MLCSLFLLLLAVGRVQT. In terms of domain architecture, LRRNT spans 18–59; that stretch reads TRPCFPGCQCEEETFGLFDSFSLIRVDCSSLGPHIVPVPIPL. LRR repeat units lie at residues 60-81, 86-107, 110-131, 133-154, 160-180, 186-207, 208-228, 231-253, 256-277, and 281-302; these read DTAH…VLAG, TLAG…AFSR, YLES…IFTS, PLSD…AFTT, ALHV…PARA, TIQS…RDLP, LRYL…AFMG, GLTH…GFRE, GLQV…EVFS, and LLQE…LLHH. The N-linked (GlcNAc...) asparagine glycan is linked to Asn-75. Asn-138 is a glycosylation site (N-linked (GlcNAc...) asparagine). Asn-191 carries an N-linked (GlcNAc...) asparagine glycan.

In terms of assembly, interacts with FZD4 (via FZ domain); competes with WNT2B for binding to FZD4, inhibiting Wnt signaling and repressing peripheral eye development. Interacts with TGFB1; the interaction contributes to regulation of the hair cycle. Interacts with netrin. Interacts with CCN2. In terms of tissue distribution, expressed in macrophages in inflamed wounds with wound expression starting 2 days post-wounding (dpw) (at protein level). At 7 dpw, expressed from epidermis and extracellular matrix in the wound edge to neoepidermis and granulation tissue and in panniculus carnosus under the granulation tissue (at protein level). After fibrosis, disappears in the dermal area at 11 dpw (at protein level). Expressed in the hair follicle during morphogenesis and the hair cycle (at protein level). In embryonic brain, strong expression in the olfactory bulb, anterior olfactory nucleus, neocortex, piriform cortex, glial wedge, midline zipper glia, indusium griseum and the area surrounding the anterior commissure (AC) but not on AC axons (at protein level). In the adult eye, expressed in retinal layers, lens epithelium, and ciliary body where it is expressed predominantly in the inner non-pigmented layer. Expressed in almost all brain regions in the embryo, in the cortex and the lateral ventricle at P0 and is restricted to the subventricular zone and lateral nucleus of the amygdala in adults. Prominent expression in hippocampal regions from early postnatal stages until postnatal day 15 and gradually declines at later stages. Expressed in almost all bone regions in the femurs of juveniles. In the inner ear, accumulates in nonprosensory regions during early embryonic stages and in both nonprosensory and prosensory regions in late embryonic stages. In the adult ear, expressed in the organ of Corti, spiral ganglion cells, and the stria vascularis. Highly expressed in the liver where it is detected primarily in hepatocytes but not in non-parenchymal cells.

The protein localises to the secreted. Functionally, contributes to various developmental events and other processes such as wound healing and cholesterol homeostasis through its interactions with multiple signaling pathways. Wnt signaling inhibitor which competes with WNT2B for binding to Wnt receptor FZD4 and represses WNT2B-dependent development of the peripheral eye. Plays a role in regulating the hair cycle by controlling TGFB1 signaling. Required for the development of the anterior commissure in the brain by inhibiting neurite outgrowth. Essential for terminal differentiation of hippocampal neural stem cells. Plays a role in regulating bone elongation and bone mass by modulating growth plate chondrocyte function and overall body size. Required for development of the inner ear through its involvement in stereocilia formation in inner hair cells. Facilitates wound healing by inhibiting secretion of TGFB1 from macrophages which prevents myofibroblast differentiation, maintaining inflammatory cell quiescence. Plays a role in cholesterol homeostasis by reducing circulating high-density lipoprotein cholesterol, lowering cholesterol efflux capacity and decreasing cholesterol-to-bile acid conversion in the liver. In one study, shown to negatively regulate sympathetic innervation in brown fat, leading to reduced energy expenditure. In another study, shown not to affect brown fat thermogenic capacity, body weight gain or glucose homeostasis. This Mus musculus (Mouse) protein is Tsukushi.